The chain runs to 125 residues: MRLSSTTFVVLAAVLLASGTAVSKADETGVTNVNAVHSPNVLAGVDKRFLRSHHTEDGEAKLSNYDNEERNGLFGANTLSNMGKDTILRFQMFTKWKANGYLPKKIKDDIPRSLYKAYKIHYRMN.

Positions 1 to 25 (MRLSSTTFVVLAAVLLASGTAVSKA) are cleaved as a signal peptide. The short motif at 48 to 70 (RFLRSHHTEDGEAKLSNYDNEER) is the RxLR-dEER element.

Belongs to the RxLR effector family.

The protein resides in the secreted. It localises to the host cell. In terms of biological role, effector that suppresses plant defense responses during the early stages of pathogen infection. Suppresses cell death induced by effectors and PAMPs in plant hosts. Triggers a hypersensitive response (HR) in the presence of Rps1d. Suppresses BAX-induced cell death and enhan,ced P.capsici infection in Nicotiana benthamiana. Also suppresses effector-triggered immunity induction by associating with Avr1b and Rps1b, suggesting a role in suppressing plant immunity. The sequence is that of RxLR effector protein Avh6 from Phytophthora sojae (strain P6497) (Soybean stem and root rot agent).